We begin with the raw amino-acid sequence, 345 residues long: MHEAQTFSSTPATKPQYPLQRFSVAPMLDWTDRHCRYFHRLLTKQALLYTEMVTTGAIIHGKADYLAYSEQDHPVALQLGGSDPQALAHCAKLAEQRGYNEINLNVGCPSDRVQNGRFGACLMGEADLVADCIKAMRDAVAIPVTVKTRIGIDQLDSYEFLCEFVQTVAERGECEIFTIHARKAWLSGLSPKENREVPPLDYERVYQLKRDFPALTIAINGGVKTLAEAKEHLKHLDGVMMGREAYQNPGILTQVDRELFDPNAPVVDSVKAIEALYPYIEQELSQGAYLGHITRHILGIFQGIPGARQWRRHLSENAHKPGAGVSVVEEALALVSPSYYESVGG.

FMN-binding positions include 26–28 (PML) and Q78. The active-site Proton donor is the C108. FMN contacts are provided by residues K147, H180, 220 to 222 (NGG), and 242 to 243 (GR).

Belongs to the Dus family. DusA subfamily. FMN serves as cofactor.

The enzyme catalyses 5,6-dihydrouridine(20) in tRNA + NADP(+) = uridine(20) in tRNA + NADPH + H(+). It carries out the reaction 5,6-dihydrouridine(20) in tRNA + NAD(+) = uridine(20) in tRNA + NADH + H(+). It catalyses the reaction 5,6-dihydrouridine(20a) in tRNA + NADP(+) = uridine(20a) in tRNA + NADPH + H(+). The catalysed reaction is 5,6-dihydrouridine(20a) in tRNA + NAD(+) = uridine(20a) in tRNA + NADH + H(+). In terms of biological role, catalyzes the synthesis of 5,6-dihydrouridine (D), a modified base found in the D-loop of most tRNAs, via the reduction of the C5-C6 double bond in target uridines. Specifically modifies U20 and U20a in tRNAs. The sequence is that of tRNA-dihydrouridine(20/20a) synthase from Yersinia pestis.